We begin with the raw amino-acid sequence, 1388 residues long: DNA-directed RNA polymerase subunit beta (1388 aa).

Belongs to the RNA polymerase beta chain family. As to quaternary structure, the RNAP catalytic core consists of 2 alpha, 1 beta, 1 beta' and 1 omega subunit. When a sigma factor is associated with the core the holoenzyme is formed, which can initiate transcription.

It carries out the reaction RNA(n) + a ribonucleoside 5'-triphosphate = RNA(n+1) + diphosphate. DNA-dependent RNA polymerase catalyzes the transcription of DNA into RNA using the four ribonucleoside triphosphates as substrates. The polypeptide is DNA-directed RNA polymerase subunit beta (Xylella fastidiosa (strain Temecula1 / ATCC 700964)).